The primary structure comprises 104 residues: Small ribosomal subunit protein bS16 (104 aa).

The protein belongs to the bacterial ribosomal protein bS16 family.

This Gemmatimonas aurantiaca (strain DSM 14586 / JCM 11422 / NBRC 100505 / T-27) protein is Small ribosomal subunit protein bS16.